The primary structure comprises 319 residues: Zinc finger protein C19B12.07c (319 aa).

The C2H2-type zinc-finger motif lies at 146–170; that stretch reads FRCLCCHVPCKNKKLLREHMNNKRH.

Belongs to the ZNF277 family.

The protein resides in the nucleus. The sequence is that of Zinc finger protein C19B12.07c from Schizosaccharomyces pombe (strain 972 / ATCC 24843) (Fission yeast).